A 369-amino-acid chain; its full sequence is Choline-phosphate cytidylyltransferase B (369 aa).

The segment at methionine 1–methionine 27 is disordered. Residues isoleucine 84, phenylalanine 85, histidine 92, and lysine 122 each contribute to the CTP site. Residues lysine 122 and tryptophan 151 each coordinate phosphocholine. 7 residues coordinate CTP: histidine 168, aspartate 169, tyrosine 173, glutamine 195, arginine 196, threonine 197, and isoleucine 200. Residues arginine 309–lysine 369 form a disordered region. 7 positions are modified to phosphoserine: serine 315, serine 319, serine 322, serine 323, serine 329, serine 331, and serine 335. The span at serine 319–serine 339 shows a compositional bias: low complexity. Threonine 345 is subject to Phosphothreonine. Phosphoserine is present on residues serine 346, serine 349, serine 350, serine 355, serine 360, and serine 362. Residues proline 351 to serine 362 show a composition bias toward low complexity.

It belongs to the cytidylyltransferase family. As to quaternary structure, homodimer. As to expression, highly expressed in brain (at protein level). Expressed in liver (at protein level). Expressed at lower levels in lung and gonads. In terms of tissue distribution, expressed in brain (at protein level). Expressed at lower levels in lung and gonads.

It is found in the endoplasmic reticulum. The protein resides in the cytoplasm. The enzyme catalyses phosphocholine + CTP + H(+) = CDP-choline + diphosphate. It functions in the pathway phospholipid metabolism; phosphatidylcholine biosynthesis; phosphatidylcholine from phosphocholine: step 1/2. Functionally, catalyzes the key rate-limiting step in the CDP-choline pathway for phosphatidylcholine biosynthesis. Plays an important role in ovary maturation and the maintenance of sperm production. Catalyzes the key rate-limiting step in the CDP-choline pathway for phosphatidylcholine biosynthesis. This Mus musculus (Mouse) protein is Choline-phosphate cytidylyltransferase B (Pcyt1b).